A 118-amino-acid chain; its full sequence is Large ribosomal subunit protein bL20 (118 aa).

Belongs to the bacterial ribosomal protein bL20 family.

Functionally, binds directly to 23S ribosomal RNA and is necessary for the in vitro assembly process of the 50S ribosomal subunit. It is not involved in the protein synthesizing functions of that subunit. In Kosmotoga olearia (strain ATCC BAA-1733 / DSM 21960 / TBF 19.5.1), this protein is Large ribosomal subunit protein bL20.